The following is a 371-amino-acid chain: Queuine tRNA-ribosyltransferase (371 aa).

Residue Asp90 is the Nucleophile of the active site. Asp90 functions as the Proton acceptor in the catalytic mechanism. Residues 90–94 (DSGGF), Ser91, Asp144, Gln189, and Gly215 contribute to the substrate site. The interval 246–252 (GVGTPEN) is RNA binding. The Nucleophile role is filled by Asp265. Positions 270 to 274 (TRNAR) are RNA binding; important for wobble base 34 recognition. Zn(2+)-binding residues include Cys303, Cys305, Cys308, and His334.

It belongs to the queuine tRNA-ribosyltransferase family. Homodimer. Within each dimer, one monomer is responsible for RNA recognition and catalysis, while the other monomer binds to the replacement base PreQ1. It depends on Zn(2+) as a cofactor.

The catalysed reaction is 7-aminomethyl-7-carbaguanine + guanosine(34) in tRNA = 7-aminomethyl-7-carbaguanosine(34) in tRNA + guanine. It functions in the pathway tRNA modification; tRNA-queuosine biosynthesis. Catalyzes the base-exchange of a guanine (G) residue with the queuine precursor 7-aminomethyl-7-deazaguanine (PreQ1) at position 34 (anticodon wobble position) in tRNAs with GU(N) anticodons (tRNA-Asp, -Asn, -His and -Tyr). Catalysis occurs through a double-displacement mechanism. The nucleophile active site attacks the C1' of nucleotide 34 to detach the guanine base from the RNA, forming a covalent enzyme-RNA intermediate. The proton acceptor active site deprotonates the incoming PreQ1, allowing a nucleophilic attack on the C1' of the ribose to form the product. After dissociation, two additional enzymatic reactions on the tRNA convert PreQ1 to queuine (Q), resulting in the hypermodified nucleoside queuosine (7-(((4,5-cis-dihydroxy-2-cyclopenten-1-yl)amino)methyl)-7-deazaguanosine). This Helicobacter pylori (strain ATCC 700392 / 26695) (Campylobacter pylori) protein is Queuine tRNA-ribosyltransferase.